Reading from the N-terminus, the 716-residue chain is Fatty acid oxidation complex subunit alpha (716 aa).

The interval 1 to 189 is enoyl-CoA hydratase/isomerase; the sequence is MIYQSPTIQV…KVGAVDAVVA (189 aa). Position 296 (Asp-296) interacts with substrate. Positions 311–716 are 3-hydroxyacyl-CoA dehydrogenase; sequence KDVKSAAVLG…AANNGSYYQA (406 aa). Residues Met-324, Asp-343, 400 to 402, Lys-407, and Ser-429 each bind NAD(+); that span reads VVE. The For 3-hydroxyacyl-CoA dehydrogenase activity role is filled by His-450. An NAD(+)-binding site is contributed by Asn-453. Substrate-binding residues include Asn-500 and Tyr-660.

The protein in the N-terminal section; belongs to the enoyl-CoA hydratase/isomerase family. In the C-terminal section; belongs to the 3-hydroxyacyl-CoA dehydrogenase family. In terms of assembly, heterotetramer of two alpha chains (FadB) and two beta chains (FadA).

It carries out the reaction a (3S)-3-hydroxyacyl-CoA + NAD(+) = a 3-oxoacyl-CoA + NADH + H(+). It catalyses the reaction a (3S)-3-hydroxyacyl-CoA = a (2E)-enoyl-CoA + H2O. The enzyme catalyses a 4-saturated-(3S)-3-hydroxyacyl-CoA = a (3E)-enoyl-CoA + H2O. The catalysed reaction is (3S)-3-hydroxybutanoyl-CoA = (3R)-3-hydroxybutanoyl-CoA. It carries out the reaction a (3Z)-enoyl-CoA = a 4-saturated (2E)-enoyl-CoA. It catalyses the reaction a (3E)-enoyl-CoA = a 4-saturated (2E)-enoyl-CoA. The protein operates within lipid metabolism; fatty acid beta-oxidation. Involved in the aerobic and anaerobic degradation of long-chain fatty acids via beta-oxidation cycle. Catalyzes the formation of 3-oxoacyl-CoA from enoyl-CoA via L-3-hydroxyacyl-CoA. It can also use D-3-hydroxyacyl-CoA and cis-3-enoyl-CoA as substrate. The protein is Fatty acid oxidation complex subunit alpha of Shewanella sp. (strain MR-7).